We begin with the raw amino-acid sequence, 91 residues long: Molybdopterin synthase sulfur carrier subunit (91 aa).

Gly91 carries the post-translational modification 1-thioglycine; alternate. Gly91 carries the post-translational modification Glycyl adenylate; alternate.

It belongs to the MoaD family. MOCS2A subfamily. Heterotetramer; composed of 2 small (MOCS2A) and 2 large (MOCS2B) subunits. In terms of processing, C-terminal thiocarboxylation occurs in 2 steps, it is first acyl-adenylated (-COAMP) via the hesA/moeB/thiF part of MOCS3, then thiocarboxylated (-COSH) via the rhodanese domain of MOCS3.

It localises to the cytoplasm. It functions in the pathway cofactor biosynthesis; molybdopterin biosynthesis. Its function is as follows. Acts as a sulfur carrier required for molybdopterin biosynthesis. Component of the molybdopterin synthase complex that catalyzes the conversion of precursor Z into molybdopterin by mediating the incorporation of 2 sulfur atoms into precursor Z to generate a dithiolene group. In the complex, serves as sulfur donor by being thiocarboxylated (-COSH) at its C-terminus by MOCS3. After interaction with MOCS2B, the sulfur is then transferred to precursor Z to form molybdopterin. This chain is Molybdopterin synthase sulfur carrier subunit, found in Anopheles gambiae (African malaria mosquito).